Consider the following 929-residue polypeptide: Valine--tRNA ligase (929 aa).

The 'HIGH' region motif lies at 40-50 (PNVTGHLHMGH). A 'KMSKS' region motif is present at residues 522-526 (KMSKS). Lys-525 contacts ATP. A coiled-coil region spans residues 855 to 926 (LAGLIDKEAE…LEQQHAEITD (72 aa)).

This sequence belongs to the class-I aminoacyl-tRNA synthetase family. ValS type 1 subfamily. As to quaternary structure, monomer.

The protein localises to the cytoplasm. The enzyme catalyses tRNA(Val) + L-valine + ATP = L-valyl-tRNA(Val) + AMP + diphosphate. Functionally, catalyzes the attachment of valine to tRNA(Val). As ValRS can inadvertently accommodate and process structurally similar amino acids such as threonine, to avoid such errors, it has a 'posttransfer' editing activity that hydrolyzes mischarged Thr-tRNA(Val) in a tRNA-dependent manner. The protein is Valine--tRNA ligase of Nitrosococcus oceani (strain ATCC 19707 / BCRC 17464 / JCM 30415 / NCIMB 11848 / C-107).